A 436-amino-acid polypeptide reads, in one-letter code: 3-ketoacyl-CoA thiolase (436 aa).

The active-site Acyl-thioester intermediate is the Cys99. Residues His392 and Cys422 each act as proton acceptor in the active site.

The protein belongs to the thiolase-like superfamily. Thiolase family. Heterotetramer of two alpha chains (FadJ) and two beta chains (FadI).

It localises to the cytoplasm. It carries out the reaction an acyl-CoA + acetyl-CoA = a 3-oxoacyl-CoA + CoA. It participates in lipid metabolism; fatty acid beta-oxidation. Its function is as follows. Catalyzes the final step of fatty acid oxidation in which acetyl-CoA is released and the CoA ester of a fatty acid two carbons shorter is formed. The sequence is that of 3-ketoacyl-CoA thiolase from Escherichia coli (strain 55989 / EAEC).